The following is a 510-amino-acid chain: MIWHVQNENLILDSTRIFMKAFHLLLFDGSFIFPECILIFGLILLLMIDSTSDQKDISWFYFISSTSLVMSIVVLLFRWREEPMISFSGNFQTNNFNEIFQFLILLSSTLCIPLSVEYIECTEMAITEFLLFVLTATLGGMFLCSANDLITIFVAPECFSLCSYLLSGYTKKDVRSNEATMKYLLMGGASSSILVHGFSWLYGSSGGEIELQEIVNGLINTQMYNSPGISIALIFITVGIGFKLSLAPSHQWTPDVYEGSPTPVVAFLSVTSKVAASALATRIFDIPFYFSSNEWHLLLEILAILSMILGNLIAITQTSMKRMLAYSSIGQIGYVIIGIIVGDSNGGYASMITYMLFYISMNLGTFACIVSFGLRTGTDNIRDYAGLYTKDPFLALSLALCLLSLGGLPPLAGFFGKLYLFWCGWQAGLYFLVSIGLLMSVVSIYYYLKIIKLLMTGRNQEITPHVRNYKRSPLRSNNSIELSMIVCVIASTISGISMNPIIEIAQDTLF.

Helical transmembrane passes span 24–44, 57–77, 99–119, 124–144, 149–169, 183–203, 227–247, 295–315, 323–343, 354–374, 395–415, 418–438, and 482–502; these read LLLFDGSFIFPECILIFGLIL, ISWFYFISSTSLVMSIVVLLF, IFQFLILLSSTLCIPLSVEYI, MAITEFLLFVLTATLGGMFLC, LITIFVAPECFSLCSYLLSGY, YLLMGGASSSILVHGFSWLYG, PGISIALIFITVGIGFKLSLA, WHLLLEILAILSMILGNLIAI, MLAYSSIGQIGYVIIGIIVGD, YMLFYISMNLGTFACIVSFGL, ALSLALCLLSLGGLPPLAGFF, LYLFWCGWQAGLYFLVSIGLL, and LSMIVCVIASTISGISMNPII.

This sequence belongs to the complex I subunit 2 family. NDH is composed of at least 16 different subunits, 5 of which are encoded in the nucleus.

The protein localises to the plastid. It is found in the chloroplast thylakoid membrane. The enzyme catalyses a plastoquinone + NADH + (n+1) H(+)(in) = a plastoquinol + NAD(+) + n H(+)(out). It carries out the reaction a plastoquinone + NADPH + (n+1) H(+)(in) = a plastoquinol + NADP(+) + n H(+)(out). NDH shuttles electrons from NAD(P)H:plastoquinone, via FMN and iron-sulfur (Fe-S) centers, to quinones in the photosynthetic chain and possibly in a chloroplast respiratory chain. The immediate electron acceptor for the enzyme in this species is believed to be plastoquinone. Couples the redox reaction to proton translocation, and thus conserves the redox energy in a proton gradient. The chain is NAD(P)H-quinone oxidoreductase subunit 2 B, chloroplastic from Lotus japonicus (Lotus corniculatus var. japonicus).